The primary structure comprises 625 residues: Putative surface protein bspA-like (625 aa).

Residues 1 to 548 (MMTPGKSSKT…KAIKGGEIAG (548 aa)) lie on the Extracellular side of the membrane. Asn15 carries an N-linked (GlcNAc...) asparagine glycan. LRR repeat units lie at residues 38 to 60 (CSSFTSIIIPNSVTSIGTKAFTG), 61 to 83 (CSSLTSITIGNSVTSFGQEAFSE), 85 to 106 (SSITSITIPNSVTTIRDFAFSG), 107 to 129 (CSKLTSITIPNSVTSLGSHAFRG), 153 to 175 (CSSLTSITIPNSVTSIYSSAFYG), 176 to 198 (CSSLTSITIPDSVLDFGSAAFQE), 200 to 221 (SKLTNIKIGNNVDSIGSLAFKR), 222 to 245 (CSSLTNITIPDSVTTIANSAFYEC), 247 to 267 (KLTSITIGKSVTRIEGNAFSK), 271 to 293 (LTSITIKTTNDITSSITTDVFLN), 325 to 347 (IPKSDSNSMIRLQEITSLPTLTH), 348 to 368 (FTNLNKVTIENINELTIPESF), and 369 to 392 (IEGDNFEILITNNIKSIDPNAFKD). N-linked (GlcNAc...) asparagine glycosylation is present at Asn227. Positions 439–538 (KQSEENPNQP…TDDPSKSKEN (100 aa)) are disordered. Low complexity predominate over residues 443–526 (ENPNQPGENP…QPGENPSQPG (84 aa)). A helical transmembrane segment spans residues 549–571 (IIIGSLIGICLVVAICFGVYYYF). At 572 to 625 (MRIKPKNKNDDNEGNQEDTIANGTNEVTNENVLATFDEQPNNESDSNGLDSAEV) the chain is on the cytoplasmic side. The disordered stretch occupies residues 577-625 (KNKNDDNEGNQEDTIANGTNEVTNENVLATFDEQPNNESDSNGLDSAEV). Polar residues predominate over residues 588–625 (EDTIANGTNEVTNENVLATFDEQPNNESDSNGLDSAEV).

The protein resides in the cell membrane. Functionally, may bind host tissue. This Trichomonas vaginalis protein is Putative surface protein bspA-like (BSPAL1).